The primary structure comprises 401 residues: Argininosuccinate synthase (401 aa).

Residues 10–18 (AYSGGVDTS) and A38 contribute to the ATP site. Y89 is an L-citrulline binding site. G119 is an ATP binding site. T121, N125, and D126 together coordinate L-aspartate. Residue N125 participates in L-citrulline binding. R129, S177, S186, E262, and Y274 together coordinate L-citrulline.

This sequence belongs to the argininosuccinate synthase family. Type 1 subfamily. As to quaternary structure, homotetramer.

It localises to the cytoplasm. The enzyme catalyses L-citrulline + L-aspartate + ATP = 2-(N(omega)-L-arginino)succinate + AMP + diphosphate + H(+). It participates in amino-acid biosynthesis; L-arginine biosynthesis; L-arginine from L-ornithine and carbamoyl phosphate: step 2/3. This Prochlorococcus marinus (strain MIT 9313) protein is Argininosuccinate synthase.